A 440-amino-acid chain; its full sequence is Exosome complex component RRP45 (440 aa).

Serine 65 bears the Phosphoserine mark. At lysine 297 the chain carries N6-acetyllysine; alternate. Lysine 297 is covalently cross-linked (Glycyl lysine isopeptide (Lys-Gly) (interchain with G-Cter in SUMO1); alternate). A Glycyl lysine isopeptide (Lys-Gly) (interchain with G-Cter in SUMO2); alternate cross-link involves residue lysine 297. A phosphoserine mark is found at serine 306 and serine 346. Residues 341–362 (EGIENSWGHLEDSEKEDEDEGG) are disordered. Positions 353-362 (SEKEDEDEGG) are enriched in acidic residues. Serine 393 and serine 395 each carry phosphoserine. Residues 404–440 (EPDKNPKKIRTQTISATQVKAPSKKPVKKRKKKRAAN) form a disordered region. Basic residues predominate over residues 425–440 (PSKKPVKKRKKKRAAN).

The protein belongs to the RNase PH family. In terms of assembly, component of the RNA exosome core complex (Exo-9), composed of EXOSC1, EXOSC2, EXOSC3, EXOSC4, EXOSC5, EXOSC6, EXOSC7, EXOSC8 and EXOSC9; within the complex interacts with EXOSC3, EXOSC4, EXOSC5 and DIS3. The catalytically inactive RNA exosome core complex (Exo-9) associates with the catalytic subunit EXOSC10/RRP6. Exo-9 may associate with DIS3 to form the nucleolar exosome complex, or DIS3L to form the cytoplasmic exosome complex. Exo-9 is formed by a hexameric base ring consisting of the heterodimers EXOSC4-EXOSC9, EXOSC5-EXOSC8 and EXOSC6-EXOSC7, and a cap ring consisting of EXOSC1, EXOSC2 and EXOSC3. The RNA exosome complex associates with cofactors C1D/RRP47, MPHOSPH6/MPP6 and MTREX/MTR4. Interacts (via C-terminus region) with SETX (via N-terminus domain); the interaction enhances SETX sumoylation. Interacts with DIS3; the interaction is direct.

It is found in the cytoplasm. It localises to the nucleus. The protein resides in the nucleolus. Its subcellular location is the nucleoplasm. Its function is as follows. Non-catalytic component of the RNA exosome complex which has 3'-&gt;5' exoribonuclease activity and participates in a multitude of cellular RNA processing and degradation events. In the nucleus, the RNA exosome complex is involved in proper maturation of stable RNA species such as rRNA, snRNA and snoRNA, in the elimination of RNA processing by-products and non-coding 'pervasive' transcripts, such as antisense RNA species and promoter-upstream transcripts (PROMPTs), and of mRNAs with processing defects, thereby limiting or excluding their export to the cytoplasm. The RNA exosome may be involved in Ig class switch recombination (CSR) and/or Ig variable region somatic hypermutation (SHM) by targeting AICDA deamination activity to transcribed dsDNA substrates. In the cytoplasm, the RNA exosome complex is involved in general mRNA turnover and specifically degrades inherently unstable mRNAs containing AU-rich elements (AREs) within their 3' untranslated regions, and in RNA surveillance pathways, preventing translation of aberrant mRNAs. It seems to be involved in degradation of histone mRNA. The catalytic inactive RNA exosome core complex of 9 subunits (Exo-9) is proposed to play a pivotal role in the binding and presentation of RNA for ribonucleolysis, and to serve as a scaffold for the association with catalytic subunits and accessory proteins or complexes. EXOSC9 binds to ARE-containing RNAs. The sequence is that of Exosome complex component RRP45 (EXOSC9) from Bos taurus (Bovine).